We begin with the raw amino-acid sequence, 898 residues long: Aconitate hydratase 1 (898 aa).

Position 2 is an N-acetylalanine (Ala2). Substrate-binding positions include Gln90 and Asp209–His211. The [4Fe-4S] cluster site is built by Cys441, Cys507, and Cys510. Substrate-binding positions include Arg540, Arg545, Arg703, and Ser784–Arg785.

It belongs to the aconitase/IPM isomerase family. In terms of assembly, monomer. Requires [4Fe-4S] cluster as cofactor. As to expression, mostly expressed in roots, stems and leaves, also present in stems and flowers.

Its subcellular location is the cytoplasm. It is found in the mitochondrion. It catalyses the reaction citrate = D-threo-isocitrate. It participates in carbohydrate metabolism; tricarboxylic acid cycle; isocitrate from oxaloacetate: step 2/2. Its function is as follows. Catalyzes the isomerization of citrate to isocitrate via cis-aconitate. Contributes to oxidative stress tolerance. May have a role in respiration. This chain is Aconitate hydratase 1, found in Arabidopsis thaliana (Mouse-ear cress).